We begin with the raw amino-acid sequence, 630 residues long: Probable potassium transport system protein Kup (630 aa).

Transmembrane regions (helical) follow at residues 17–37, 51–71, 105–125, 144–164, 175–195, 218–238, 255–275, 283–303, 344–364, 374–394, 402–422, and 428–448; these read LAIA…LYSL, PSAI…VVGI, ITGL…GDAV, PQLS…LFWI, LFGP…IYHI, VLLA…AEAL, YVLV…LLLL, PFFL…STVA, IYVP…VIGF, YGIA…VVMV, LLVA…FGAN, and QGGW…MTWY.

Belongs to the HAK/KUP transporter (TC 2.A.72) family.

Its subcellular location is the cell inner membrane. It catalyses the reaction K(+)(in) + H(+)(in) = K(+)(out) + H(+)(out). Functionally, transport of potassium into the cell. Likely operates as a K(+):H(+) symporter. The sequence is that of Probable potassium transport system protein Kup from Burkholderia pseudomallei (strain K96243).